The chain runs to 273 residues: 4-diphosphocytidyl-2-C-methyl-D-erythritol kinase (273 aa).

Residue Lys12 is part of the active site. Residue 90 to 100 (PVASGIGGGSA) participates in ATP binding. Asp122 is a catalytic residue.

This sequence belongs to the GHMP kinase family. IspE subfamily.

It catalyses the reaction 4-CDP-2-C-methyl-D-erythritol + ATP = 4-CDP-2-C-methyl-D-erythritol 2-phosphate + ADP + H(+). Its pathway is isoprenoid biosynthesis; isopentenyl diphosphate biosynthesis via DXP pathway; isopentenyl diphosphate from 1-deoxy-D-xylulose 5-phosphate: step 3/6. In terms of biological role, catalyzes the phosphorylation of the position 2 hydroxy group of 4-diphosphocytidyl-2C-methyl-D-erythritol. In Paracoccus denitrificans (strain Pd 1222), this protein is 4-diphosphocytidyl-2-C-methyl-D-erythritol kinase.